A 178-amino-acid polypeptide reads, in one-letter code: Cytochrome b6-f complex iron-sulfur subunit (178 aa).

Residues 20-42 (LLTFGSVTGVALGALYPVANYFI) form a helical membrane-spanning segment. Residues 65–161 (ASGWLSSHPE…VSVENDNVFV (97 aa)) form the Rieske domain. [2Fe-2S] cluster is bound by residues C107, H109, C125, and H128. A disulfide bond links C112 and C127.

It belongs to the Rieske iron-sulfur protein family. In terms of assembly, the 4 large subunits of the cytochrome b6-f complex are cytochrome b6, subunit IV (17 kDa polypeptide, PetD), cytochrome f and the Rieske protein, while the 4 small subunits are PetG, PetL, PetM and PetN. The complex functions as a dimer. It depends on [2Fe-2S] cluster as a cofactor.

It is found in the cellular thylakoid membrane. It carries out the reaction 2 oxidized [plastocyanin] + a plastoquinol + 2 H(+)(in) = 2 reduced [plastocyanin] + a plastoquinone + 4 H(+)(out). In terms of biological role, component of the cytochrome b6-f complex, which mediates electron transfer between photosystem II (PSII) and photosystem I (PSI), cyclic electron flow around PSI, and state transitions. This chain is Cytochrome b6-f complex iron-sulfur subunit, found in Synechococcus sp. (strain CC9605).